Here is a 129-residue protein sequence, read N- to C-terminus: MAKAPVRTRKRVRKQVSDGVAHVHASFNNTIVTITDRQGNALGWATAGGSGFRGSRKSTPFAAQVAAERCADAVKEYGIKNLEVMVKGPGPGRESTIRALNAAGFRITNITDVTPIPHNGCRPPKKRRV.

Belongs to the universal ribosomal protein uS11 family. Part of the 30S ribosomal subunit. Interacts with proteins S7 and S18. Binds to IF-3.

Its function is as follows. Located on the platform of the 30S subunit, it bridges several disparate RNA helices of the 16S rRNA. Forms part of the Shine-Dalgarno cleft in the 70S ribosome. This is Small ribosomal subunit protein uS11 from Serratia proteamaculans (strain 568).